The sequence spans 166 residues: Large ribosomal subunit protein uL10 (166 aa).

The protein belongs to the universal ribosomal protein uL10 family. Part of the ribosomal stalk of the 50S ribosomal subunit. The N-terminus interacts with L11 and the large rRNA to form the base of the stalk. The C-terminus forms an elongated spine to which L12 dimers bind in a sequential fashion forming a multimeric L10(L12)X complex.

In terms of biological role, forms part of the ribosomal stalk, playing a central role in the interaction of the ribosome with GTP-bound translation factors. The sequence is that of Large ribosomal subunit protein uL10 from Pseudomonas fluorescens (strain Pf0-1).